We begin with the raw amino-acid sequence, 400 residues long: Aspartate/prephenate aminotransferase (400 aa).

L-aspartate-binding residues include glycine 39, tryptophan 125, and asparagine 175. Residue lysine 239 is modified to N6-(pyridoxal phosphate)lysine. Arginine 375 contacts L-aspartate.

The protein belongs to the class-I pyridoxal-phosphate-dependent aminotransferase family. In terms of assembly, homodimer. Requires pyridoxal 5'-phosphate as cofactor.

It localises to the cytoplasm. The enzyme catalyses L-aspartate + 2-oxoglutarate = oxaloacetate + L-glutamate. It catalyses the reaction L-arogenate + 2-oxoglutarate = prephenate + L-glutamate. Catalyzes the reversible conversion of aspartate and 2-oxoglutarate to glutamate and oxaloacetate. Can also transaminate prephenate in the presence of glutamate. The chain is Aspartate/prephenate aminotransferase from Cereibacter sphaeroides (strain ATCC 17029 / ATH 2.4.9) (Rhodobacter sphaeroides).